A 185-amino-acid polypeptide reads, in one-letter code: Peptidoglycan-recognition protein SC1a/b (185 aa).

A signal peptide spans 1–21; the sequence is MVSKVALLLAVLVCSQYMAQG. Residues 46 to 170 enclose the N-acetylmuramoyl-L-alanine amidase domain; that stretch reads SYAIIHHTAG…RQVSATECPG (125 aa). Residue His51 coordinates Zn(2+). Residues Cys58 and Cys64 are joined by a disulfide bond. Zn(2+) is bound by residues His160 and Cys168.

The protein belongs to the N-acetylmuramoyl-L-alanine amidase 2 family. It depends on Zn(2+) as a cofactor.

The protein localises to the secreted. The catalysed reaction is Hydrolyzes the link between N-acetylmuramoyl residues and L-amino acid residues in certain cell-wall glycopeptides.. In terms of biological role, N-acetylmuramyl-L-alanine amidase involved in innate immunity by degrading bacterial peptidoglycans (PGN). Plays a scavenger role by digesting biologically active PGN into biologically inactive fragments. Has no direct bacteriolytic activity. In Drosophila simulans (Fruit fly), this protein is Peptidoglycan-recognition protein SC1a/b (PGRP-SC1a).